We begin with the raw amino-acid sequence, 267 residues long: L-aspartate dehydrogenase (267 aa).

2 residues coordinate NAD(+): Ala-124 and Asn-190. His-220 is an active-site residue.

This sequence belongs to the L-aspartate dehydrogenase family.

It carries out the reaction L-aspartate + NADP(+) + H2O = oxaloacetate + NH4(+) + NADPH + H(+). The enzyme catalyses L-aspartate + NAD(+) + H2O = oxaloacetate + NH4(+) + NADH + H(+). Its pathway is cofactor biosynthesis; NAD(+) biosynthesis; iminoaspartate from L-aspartate (dehydrogenase route): step 1/1. Functionally, specifically catalyzes the NAD or NADP-dependent dehydrogenation of L-aspartate to iminoaspartate. The protein is L-aspartate dehydrogenase of Ralstonia pickettii (strain 12J).